The chain runs to 627 residues: Asparagine synthetase domain-containing protein 1 (627 aa).

The active-site For GATase activity is the cysteine 2. In terms of domain architecture, Glutamine amidotransferase type-2 spans 2 to 184 (CGICCSVSFS…ASGIFQIDLN (183 aa)). The region spanning 308 to 597 (ASKEVLKTCS…GLPASALLPK (290 aa)) is the Asparagine synthetase domain. The disordered stretch occupies residues 373–404 (QQNHHEIPSEESSQSPAADEGPGEAEVPDRVT).

In Mus musculus (Mouse), this protein is Asparagine synthetase domain-containing protein 1 (Asnsd1).